Consider the following 428-residue polypeptide: Dihydroorotase (428 aa).

His-60 and His-62 together coordinate Zn(2+). Residues 62–64 and Asn-94 contribute to the substrate site; that span reads HLR. Asp-152, His-179, and His-232 together coordinate Zn(2+). Residue Asn-278 coordinates substrate. A Zn(2+)-binding site is contributed by Asp-305. Residue Asp-305 is part of the active site. Position 309 (His-309) interacts with substrate.

It belongs to the metallo-dependent hydrolases superfamily. DHOase family. Class I DHOase subfamily. It depends on Zn(2+) as a cofactor.

It catalyses the reaction (S)-dihydroorotate + H2O = N-carbamoyl-L-aspartate + H(+). It participates in pyrimidine metabolism; UMP biosynthesis via de novo pathway; (S)-dihydroorotate from bicarbonate: step 3/3. In terms of biological role, catalyzes the reversible cyclization of carbamoyl aspartate to dihydroorotate. In Ruminiclostridium cellulolyticum (strain ATCC 35319 / DSM 5812 / JCM 6584 / H10) (Clostridium cellulolyticum), this protein is Dihydroorotase.